The sequence spans 446 residues: Transcription factor SOX-8 (446 aa).

Disordered stretches follow at residues 1-58 (MLDM…DPAE), 155-259 (AERL…RQNI), and 318-378 (HKSA…PFAG). The span at 40 to 53 (EGLGRAGVAVGGAR) shows a compositional bias: gly residues. A dimerization (DIM) region spans residues 58–100 (EAADERFPACIRDAVSQVLKGYDWSLVPMPVRGGGGGALKAKP). The HMG box DNA-binding region spans 102–170 (VKRPMNAFMV…QHKKDHPDYK (69 aa)). Composition is skewed to basic and acidic residues over residues 155 to 171 (AERLRVQHKKDHPDYKY), 210 to 219 (DGHHHGDHTG), and 242 to 253 (PELKLEGRRPVD). Residues 224–298 (PPTPPTTPKT…LPLGGPAPPE (75 aa)) are transactivation domain (TAM). Residues 335–446 (RPHIKTEQPS…QPVYTTLTRP (112 aa)) are transactivation domain (TAC). Positions 362–378 (SGQSSATPAAPAGPFAG) are enriched in low complexity. Residues 400-408 (PGLYQYPCF) carry the 9aaTAD motif. Residues 425-446 (LPPAHSPTSHWDQPVYTTLTRP) are disordered. Residues 430–446 (SPTSHWDQPVYTTLTRP) show a composition bias toward polar residues.

It is found in the nucleus. Functionally, transcription factor that may play a role in central nervous system, limb and facial development. May be involved in male sex determination. Binds the consensus motif 5'-[AT][AT]CAA[AT]G-3'. The sequence is that of Transcription factor SOX-8 from Homo sapiens (Human).